Here is a 465-residue protein sequence, read N- to C-terminus: Chromosomal replication initiator protein DnaA (465 aa).

The interval 1–87 (MLWTDCLTRL…RPGSILSSSE (87 aa)) is domain I, interacts with DnaA modulators. A disordered region spans residues 81–123 (SILSSSEQPATTTAALQTAPIPQPAKVKREPEPVANTAVSSKS). The segment covering 88–100 (QPATTTAALQTAP) has biased composition (low complexity). The domain II stretch occupies residues 88 to 127 (QPATTTAALQTAPIPQPAKVKREPEPVANTAVSSKSSKKK). A domain III, AAA+ region region spans residues 128 to 345 (LLNPQFTFSL…GALNKVVAIS (218 aa)). Positions 173, 175, 176, and 177 each coordinate ATP. The interval 346-465 (RFKGAPIDLD…YKNLLRLLQS (120 aa)) is domain IV, binds dsDNA.

The protein belongs to the DnaA family. As to quaternary structure, oligomerizes as a right-handed, spiral filament on DNA at oriC.

It localises to the cytoplasm. In terms of biological role, plays an essential role in the initiation and regulation of chromosomal replication. ATP-DnaA binds to the origin of replication (oriC) to initiate formation of the DNA replication initiation complex once per cell cycle. Binds the DnaA box (a 9 base pair repeat at the origin) and separates the double-stranded (ds)DNA. Forms a right-handed helical filament on oriC DNA; dsDNA binds to the exterior of the filament while single-stranded (ss)DNA is stabiized in the filament's interior. The ATP-DnaA-oriC complex binds and stabilizes one strand of the AT-rich DNA unwinding element (DUE), permitting loading of DNA polymerase. After initiation quickly degrades to an ADP-DnaA complex that is not apt for DNA replication. Binds acidic phospholipids. This chain is Chromosomal replication initiator protein DnaA, found in Acinetobacter baumannii (strain ATCC 17978 / DSM 105126 / CIP 53.77 / LMG 1025 / NCDC KC755 / 5377).